A 242-amino-acid chain; its full sequence is ATP-dependent dethiobiotin synthetase BioD (242 aa).

ATP is bound at residue 12 to 17 (EVGKTV). A Mg(2+)-binding site is contributed by Thr16. The active site involves Lys37. Substrate is bound at residue Ser41. ATP-binding positions include Asp51 and 112–115 (EGAG). Mg(2+) is bound by residues Asp51 and Glu112.

It belongs to the dethiobiotin synthetase family. In terms of assembly, homodimer. Mg(2+) serves as cofactor.

It is found in the cytoplasm. The enzyme catalyses (7R,8S)-7,8-diammoniononanoate + CO2 + ATP = (4R,5S)-dethiobiotin + ADP + phosphate + 3 H(+). The protein operates within cofactor biosynthesis; biotin biosynthesis; biotin from 7,8-diaminononanoate: step 1/2. In terms of biological role, catalyzes a mechanistically unusual reaction, the ATP-dependent insertion of CO2 between the N7 and N8 nitrogen atoms of 7,8-diaminopelargonic acid (DAPA, also called 7,8-diammoniononanoate) to form a ureido ring. The chain is ATP-dependent dethiobiotin synthetase BioD from Bacillus thuringiensis (strain Al Hakam).